Consider the following 198-residue polypeptide: 5'-deoxynucleotidase hdd1 (198 aa).

In terms of domain architecture, HD spans isoleucine 38–isoleucine 144. Residues histidine 41, histidine 69, aspartate 70, glutamate 73, aspartate 78, isoleucine 79, and aspartate 139 each contribute to the a divalent metal cation site.

The protein belongs to the HDDC2 family. In terms of assembly, homodimer. Requires Mn(2+) as cofactor. The cofactor is Co(2+). Mg(2+) serves as cofactor.

It is found in the cytoplasm. Its subcellular location is the nucleus. It carries out the reaction a 2'-deoxyribonucleoside 5'-phosphate + H2O = a 2'-deoxyribonucleoside + phosphate. Catalyzes the dephosphorylation of the nucleoside 5'-monophosphates deoxyadenosine monophosphate (dAMP), deoxycytidine monophosphate (dCMP), deoxyguanosine monophosphate (dGMP) and deoxythymidine monophosphate (dTMP). In Schizosaccharomyces pombe (strain 972 / ATCC 24843) (Fission yeast), this protein is 5'-deoxynucleotidase hdd1.